The primary structure comprises 595 residues: Probable Xaa-Pro aminopeptidase CHGG_02942 (595 aa).

Residues 51 to 76 form a disordered region; sequence KSGPSSSNLSPSTLSTEKTSSDSSGV. Low complexity predominate over residues 52–66; sequence SGPSSSNLSPSTLST. The Mn(2+) site is built by D334, D345, E541, and E563.

This sequence belongs to the peptidase M24B family. Mn(2+) is required as a cofactor.

The catalysed reaction is Release of any N-terminal amino acid, including proline, that is linked to proline, even from a dipeptide or tripeptide.. Its function is as follows. Catalyzes the removal of a penultimate prolyl residue from the N-termini of peptides. The chain is Probable Xaa-Pro aminopeptidase CHGG_02942 from Chaetomium globosum (strain ATCC 6205 / CBS 148.51 / DSM 1962 / NBRC 6347 / NRRL 1970) (Soil fungus).